A 718-amino-acid polypeptide reads, in one-letter code: Scarecrow-like protein 9 (718 aa).

A disordered region spans residues 305–338 (VEKKKASDAQGGKRRARGRGRGRGRGGGGGQNGK). Over residues 316–328 (GKRRARGRGRGRG) the composition is skewed to basic residues. One can recognise a GRAS domain in the interval 335 to 713 (QNGKKEVVDL…RTVMALSVWK (379 aa)). The segment at 342–402 (VDLRSLLIHC…EARLAGTGSQ (61 aa)) is leucine repeat I (LRI). The segment at 421–484 (HQLFLACCPF…YGSPKVRITG (64 aa)) is VHIID. The VHIID signature appears at 452-456 (VHVID). The leucine repeat II (LRII) stretch occupies residues 500 to 532 (ETGQRLAAYAKLFGVPFEYKAIAKKWDAIQLED). The interval 541–635 (TVVNCLYRAE…MEVFGREALN (95 aa)) is PFYRE. Positions 638-713 (ACEGWERVER…RTVMALSVWK (76 aa)) are SAW.

Belongs to the GRAS family. As to expression, expressed in cotyledons, leaves and flowers, and in the elongation zone in root.

Its subcellular location is the nucleus. Functionally, probable transcription factor involved in plant development. The sequence is that of Scarecrow-like protein 9 (SCL9) from Arabidopsis thaliana (Mouse-ear cress).